We begin with the raw amino-acid sequence, 111 residues long: Large ribosomal subunit protein uL23 (111 aa).

It belongs to the universal ribosomal protein uL23 family. In terms of assembly, part of the 50S ribosomal subunit. Contacts protein L29, and trigger factor when it is bound to the ribosome.

In terms of biological role, one of the early assembly proteins it binds 23S rRNA. One of the proteins that surrounds the polypeptide exit tunnel on the outside of the ribosome. Forms the main docking site for trigger factor binding to the ribosome. The sequence is that of Large ribosomal subunit protein uL23 from Chlamydia trachomatis serovar L2 (strain ATCC VR-902B / DSM 19102 / 434/Bu).